The primary structure comprises 1410 residues: Non-secreted LysM effector LysM15 (1410 aa).

2 LysM domains span residues 1179–1225 and 1231–1277; these read TTYT…DICM and TQYT…EILG. Low complexity predominate over residues 1291–1303; it reads TTGDGITTTPGNG. Residues 1291 to 1317 form a disordered region; it reads TTGDGITTTPGNGEYAQGVVSPPENST. In terms of domain architecture, LysM 3 spans 1328–1375; the sequence is RWYSATADDLCVQICLKSGVSAKLFKAANPSLAADCDNSLIAGDAYCV.

This sequence belongs to the secreted LysM effector family.

Functionally, non-secreted LysM effector that might be involved in manipulation of host defenses for successful infection. This is Non-secreted LysM effector LysM15 from Penicillium expansum (Blue mold rot fungus).